Here is a 252-residue protein sequence, read N- to C-terminus: Trans-aconitate 2-methyltransferase (252 aa).

This sequence belongs to the methyltransferase superfamily. Tam family.

The protein resides in the cytoplasm. The enzyme catalyses trans-aconitate + S-adenosyl-L-methionine = (E)-3-(methoxycarbonyl)pent-2-enedioate + S-adenosyl-L-homocysteine. Its function is as follows. Catalyzes the S-adenosylmethionine monomethyl esterification of trans-aconitate. The chain is Trans-aconitate 2-methyltransferase from Escherichia coli O139:H28 (strain E24377A / ETEC).